The following is a 362-amino-acid chain: MEQLKVEVDPKQGGDLPSIYTLQFEELEMWLKEQGEPKFRATQIFEWLYEKRVKQFQEMTNLSKDLRAKLEKHFNLTTLKTVTKQQSSDGTIKFLFELHDGYSIETVVMRHNYGNSVCVTTQVGCRLGCTFCASTLGGLKRNLEAGEIVAQVVEAQRAMDEQGERVGSIVVMGIGEPFDNYQALMPFLKTVNHDKGLNIGARHITVSTSGVVPKIYQFADEGLQINFAISLHAPNTELRSKLMPVNRAWPLPKLMDAIRYYIDKTGRRVTFEYGLFGGENDQVEHAEELADLIKDIKCHVNLIPVNYVPERDYVRTPRDQIFAFERTLKERGVNVTIRREQGHDIDAACGQLRAKERKEETR.

The active-site Proton acceptor is E105. One can recognise a Radical SAM core domain in the interval 111–344 (HNYGNSVCVT…VTIRREQGHD (234 aa)). C118 and C349 are oxidised to a cystine. [4Fe-4S] cluster contacts are provided by C125, C129, and C132. Residues 175-176 (GE), S207, 230-232 (SLH), and N306 each bind S-adenosyl-L-methionine. The active-site S-methylcysteine intermediate is C349.

It belongs to the radical SAM superfamily. RlmN family. Requires [4Fe-4S] cluster as cofactor.

It localises to the cytoplasm. It catalyses the reaction adenosine(2503) in 23S rRNA + 2 reduced [2Fe-2S]-[ferredoxin] + 2 S-adenosyl-L-methionine = 2-methyladenosine(2503) in 23S rRNA + 5'-deoxyadenosine + L-methionine + 2 oxidized [2Fe-2S]-[ferredoxin] + S-adenosyl-L-homocysteine. The enzyme catalyses adenosine(37) in tRNA + 2 reduced [2Fe-2S]-[ferredoxin] + 2 S-adenosyl-L-methionine = 2-methyladenosine(37) in tRNA + 5'-deoxyadenosine + L-methionine + 2 oxidized [2Fe-2S]-[ferredoxin] + S-adenosyl-L-homocysteine. Functionally, specifically methylates position 2 of adenine 2503 in 23S rRNA and position 2 of adenine 37 in tRNAs. This is Probable dual-specificity RNA methyltransferase RlmN from Halalkalibacterium halodurans (strain ATCC BAA-125 / DSM 18197 / FERM 7344 / JCM 9153 / C-125) (Bacillus halodurans).